Here is a 379-residue protein sequence, read N- to C-terminus: DnaJ homolog subfamily B member 14 (379 aa).

Residues 1–244 lie on the Cytoplasmic side of the membrane; sequence MEGNRDEAEK…GHEREEERAD (244 aa). The tract at residues 56–90 is disordered; that stretch reads TAGSSTHCRKPPGSSDQSKPSCGKDGTSGAGEGGK. The 65-residue stretch at 108-172 folds into the J domain; it reads NYYEVLGVTK…EKRKQYDLTG (65 aa). A helical membrane pass occupies residues 245–265; it reads GGFSVFIQLMPIIVLILVSLL. Topologically, residues 266–379 are lumenal; that stretch reads SQLMVSNPPY…ERLTSLYKGG (114 aa).

It belongs to the DnaJ family. DNAJB12/DNAJB14 subfamily. As to quaternary structure, interacts (via J domain) with HSPA8/Hsc70. Forms a multiprotein complex, at least composed of DNAJB12, DNAJB14, HSPA8/Hsc70 and SGTA; interaction with DNAJB14 and HSPA8/Hsc70 is direct.

The protein localises to the endoplasmic reticulum membrane. Its subcellular location is the nucleus membrane. Acts as a co-chaperone with HSPA8/Hsc70; required to promote protein folding and trafficking, prevent aggregation of client proteins, and promote unfolded proteins to endoplasmic reticulum-associated degradation (ERAD) pathway. Acts by determining HSPA8/Hsc70's ATPase and polypeptide-binding activities. Can also act independently of HSPA8/Hsc70: together with DNAJB12, acts as a chaperone that promotes maturation of potassium channels KCND2 and KCNH2 by stabilizing nascent channel subunits and assembling them into tetramers. While stabilization of nascent channel proteins is dependent on HSPA8/Hsc70, the process of oligomerization of channel subunits is independent of HSPA8/Hsc70. When overexpressed, forms membranous structures together with DNAJB12 and HSPA8/Hsc70 within the nucleus; the role of these structures, named DJANGOs, is still unclear. In Mus musculus (Mouse), this protein is DnaJ homolog subfamily B member 14.